The primary structure comprises 122 residues: Large ribosomal subunit protein uL18 (122 aa).

It belongs to the universal ribosomal protein uL18 family. In terms of assembly, part of the 50S ribosomal subunit; part of the 5S rRNA/L5/L18/L25 subcomplex. Contacts the 5S and 23S rRNAs.

Functionally, this is one of the proteins that bind and probably mediate the attachment of the 5S RNA into the large ribosomal subunit, where it forms part of the central protuberance. The chain is Large ribosomal subunit protein uL18 from Prochlorococcus marinus (strain MIT 9301).